A 292-amino-acid chain; its full sequence is Ribosomal RNA small subunit methyltransferase H (292 aa).

S-adenosyl-L-methionine contacts are provided by residues glycine 32–histidine 34, aspartate 51, leucine 87, aspartate 101, and glutamine 108.

This sequence belongs to the methyltransferase superfamily. RsmH family.

The protein localises to the cytoplasm. The enzyme catalyses cytidine(1402) in 16S rRNA + S-adenosyl-L-methionine = N(4)-methylcytidine(1402) in 16S rRNA + S-adenosyl-L-homocysteine + H(+). Its function is as follows. Specifically methylates the N4 position of cytidine in position 1402 (C1402) of 16S rRNA. The protein is Ribosomal RNA small subunit methyltransferase H of Pseudothermotoga lettingae (strain ATCC BAA-301 / DSM 14385 / NBRC 107922 / TMO) (Thermotoga lettingae).